We begin with the raw amino-acid sequence, 315 residues long: Biotin synthase (315 aa).

One can recognise a Radical SAM core domain in the interval 39 to 266; sequence NSLQFATLLS…KSAIRLTAGR (228 aa). Cys-54, Cys-58, and Cys-61 together coordinate [4Fe-4S] cluster. 4 residues coordinate [2Fe-2S] cluster: Cys-98, Cys-129, Cys-189, and Arg-261.

This sequence belongs to the radical SAM superfamily. Biotin synthase family. In terms of assembly, homodimer. [4Fe-4S] cluster is required as a cofactor. Requires [2Fe-2S] cluster as cofactor.

The catalysed reaction is (4R,5S)-dethiobiotin + (sulfur carrier)-SH + 2 reduced [2Fe-2S]-[ferredoxin] + 2 S-adenosyl-L-methionine = (sulfur carrier)-H + biotin + 2 5'-deoxyadenosine + 2 L-methionine + 2 oxidized [2Fe-2S]-[ferredoxin]. The protein operates within cofactor biosynthesis; biotin biosynthesis; biotin from 7,8-diaminononanoate: step 2/2. Functionally, catalyzes the conversion of dethiobiotin (DTB) to biotin by the insertion of a sulfur atom into dethiobiotin via a radical-based mechanism. This Legionella pneumophila (strain Corby) protein is Biotin synthase.